A 161-amino-acid chain; its full sequence is Small ribosomal subunit protein uS9 (161 aa).

The segment at 1-38 (MAQTITSLADLKQGPGAEPAGLSAEPQEPKLDKEGRAY) is disordered. Positions 27–38 (QEPKLDKEGRAY) are enriched in basic and acidic residues.

This sequence belongs to the universal ribosomal protein uS9 family.

The sequence is that of Small ribosomal subunit protein uS9 from Rhodospirillum centenum (strain ATCC 51521 / SW).